Reading from the N-terminus, the 429-residue chain is Histidine--tRNA ligase (429 aa).

Belongs to the class-II aminoacyl-tRNA synthetase family. As to quaternary structure, homodimer.

The protein localises to the cytoplasm. It catalyses the reaction tRNA(His) + L-histidine + ATP = L-histidyl-tRNA(His) + AMP + diphosphate + H(+). The polypeptide is Histidine--tRNA ligase (Streptococcus pneumoniae (strain Hungary19A-6)).